Reading from the N-terminus, the 505-residue chain is Histidine--tRNA ligase, mitochondrial (505 aa).

A mitochondrion-targeting transit peptide spans 1–31 (MPHLGPLRRRAWAALLGQLLRPPSTVCTRGC). Residue serine 66 is modified to Phosphoserine. L-histidine-binding positions include 130–132 (DLT), arginine 157, glutamine 173, aspartate 177, arginine 326, and 330–331 (YY). N6-acetyllysine is present on lysine 443.

Belongs to the class-II aminoacyl-tRNA synthetase family. As to quaternary structure, homodimer.

It localises to the mitochondrion. It catalyses the reaction tRNA(His) + L-histidine + ATP = L-histidyl-tRNA(His) + AMP + diphosphate + H(+). In terms of biological role, mitochondrial aminoacyl-tRNA synthetase that catalyzes the ATP-dependent ligation of histidine to the 3'-end of its cognate tRNA, via the formation of an aminoacyl-adenylate intermediate (His-AMP). This chain is Histidine--tRNA ligase, mitochondrial (Hars2), found in Mus musculus (Mouse).